Here is a 744-residue protein sequence, read N- to C-terminus: MEQTYQYAWIIPFLPLPVPMLIGLGLFLFPTATKSLRRMWAFQSVLLLSIVMIFSMNLSIQQINSSSAYQYVWSWIINNDVSLEFGYLIDPLTSIMSILITTVGILVLIYSDNYMSHDHGYLRFFVYMSFFSTSMLGLVTSSNLIQIYIFWELVGICSYLLIGFWFTRPVAAKACQKAFVTNRVGDFGLLLGILGFYWITGSFEFRNLFQIFNNLISNNEVNFLFVTLCAVLLFAGAIAKSAQFPLHVWLPDAMEGPTPISALIHAATMVAAGIFLVARLLPLFIVIPHIMNFISLIGIITVFLGATLALAQKDIKRGLAYSTMSQLGYMMLALGMGSYRSALFHLITHAYSKALLFLGSGSVIHSMETLVGYCPKKSQNMVLMGGLTKHVPITKTSFLLGTLSLCGIPPLACFWSKDEILNDSWLYSPIFAIIAWSTAGLTAFYMCRIYLLTFEGHLNVHFQNYSGKKNTPFYSISLWGKEGSKISNKNFSLITLLKMKKDGRPSFFSNKVYKIDENVRNMIQPFLSIPHFGNTKTYSYPYESDNTMLFPILILVLFTLFVGFLGIPFNQDGVDLDILSKWLTPSINLLHKNSNNSIDWYEFCKDAVFSVSISSFGIFIAFFLYKPVYSSFQNLDLINSFVKMGPKRIFSDKIKKVIYDWSYNRGYIDAFYETFLTVGMRNLAKFAHFFDRRIIDGMPNGVGLMSFFVAEVIKSVGGGRISSYLFFYFSYVSIFLLIYYFLNF.

Transmembrane regions (helical) follow at residues 9 to 29, 40 to 60, 89 to 109, 125 to 145, 147 to 167, 185 to 205, 219 to 239, 258 to 278, 290 to 312, 327 to 347, 354 to 374, 396 to 416, 425 to 445, 549 to 569, 608 to 628, and 724 to 744; these read WIIP…LFLF, WAFQ…NLSI, IDPL…LVLI, FVYM…SNLI, IYIF…FWFT, GDFG…SFEF, NEVN…GAIA, TPIS…FLVA, IMNF…ALAQ, LGYM…FHLI, ALLF…VGYC, TSFL…CFWS, WLYS…TAFY, LFPI…GIPF, VFSV…YKPV, and YLFF…FLNF.

It belongs to the complex I subunit 5 family. In terms of assembly, NDH is composed of at least 16 different subunits, 5 of which are encoded in the nucleus.

It localises to the plastid. It is found in the chloroplast thylakoid membrane. The catalysed reaction is a plastoquinone + NADH + (n+1) H(+)(in) = a plastoquinol + NAD(+) + n H(+)(out). The enzyme catalyses a plastoquinone + NADPH + (n+1) H(+)(in) = a plastoquinol + NADP(+) + n H(+)(out). Functionally, NDH shuttles electrons from NAD(P)H:plastoquinone, via FMN and iron-sulfur (Fe-S) centers, to quinones in the photosynthetic chain and possibly in a chloroplast respiratory chain. The immediate electron acceptor for the enzyme in this species is believed to be plastoquinone. Couples the redox reaction to proton translocation, and thus conserves the redox energy in a proton gradient. This Mutisia acuminata protein is NAD(P)H-quinone oxidoreductase subunit 5, chloroplastic (ndhF).